Reading from the N-terminus, the 476-residue chain is Cysteine--tRNA ligase (476 aa).

Cysteine 29 serves as a coordination point for Zn(2+). Residues 31 to 41 (PTVYDYTHIGH) carry the 'HIGH' region motif. Cysteine 209, histidine 234, and glutamate 238 together coordinate Zn(2+). Residues 266–270 (KMSKS) carry the 'KMSKS' region motif. Lysine 269 lines the ATP pocket.

The protein belongs to the class-I aminoacyl-tRNA synthetase family. Requires Zn(2+) as cofactor.

It localises to the cytoplasm. The enzyme catalyses tRNA(Cys) + L-cysteine + ATP = L-cysteinyl-tRNA(Cys) + AMP + diphosphate. In Thermococcus kodakarensis (strain ATCC BAA-918 / JCM 12380 / KOD1) (Pyrococcus kodakaraensis (strain KOD1)), this protein is Cysteine--tRNA ligase.